The chain runs to 657 residues: Glycogen debranching enzyme (657 aa).

Catalysis depends on D336, which acts as the Nucleophile. Catalysis depends on E371, which acts as the Proton donor. Residues 458 to 467 are compositionally biased toward basic and acidic residues; the sequence is NEANGEENRD. The segment at 458–479 is disordered; that stretch reads NEANGEENRDGTNNNYSNNHGK.

This sequence belongs to the glycosyl hydrolase 13 family.

It carries out the reaction Hydrolysis of (1-&gt;6)-alpha-D-glucosidic linkages to branches with degrees of polymerization of three or four glucose residues in limit dextrin.. It functions in the pathway glycan degradation; glycogen degradation. Its function is as follows. Removes maltotriose and maltotetraose chains that are attached by 1,6-alpha-linkage to the limit dextrin main chain, generating a debranched limit dextrin. The sequence is that of Glycogen debranching enzyme from Escherichia coli (strain K12 / DH10B).